Here is a 71-residue protein sequence, read N- to C-terminus: Protein KleB (71 aa).

A DNA-binding region (H-T-H motif) is located at residues 9–28 (IETCCRRCGKSIRTLSHTII).

The chain is Protein KleB (kleB) from Escherichia coli.